The sequence spans 129 residues: Small ribosomal subunit protein uS11 (129 aa).

Belongs to the universal ribosomal protein uS11 family. As to quaternary structure, part of the 30S ribosomal subunit. Interacts with proteins S7 and S18. Binds to IF-3.

In terms of biological role, located on the platform of the 30S subunit, it bridges several disparate RNA helices of the 16S rRNA. Forms part of the Shine-Dalgarno cleft in the 70S ribosome. The protein is Small ribosomal subunit protein uS11 of Hahella chejuensis (strain KCTC 2396).